The sequence spans 428 residues: MSYLVTIIAFIIVFGVLVTVHEYGHMFFAKRAGIMCPEFAIGMGPKIFSFRKNETLYTIRLLPVGGYVRMAGDGLEEPPVEPGMNVKIKLNEENEITHIILDDHHKFQQIEAIEVKKCDFKDDLFIEGITAYDNERHHFKIARKSFFVENGSLVQIAPRDRQFAHKKPWPKFLTLFAGPLFNFILALVLFIGLAYYQGTPTSTVEQVADKYPAQQAGLQKGDKIVQIGKYKISEFDDVDKALDKVKDNKTTVKFERDGKTKSVELTPKKTEKKLTKVSSETKYVLGFQPASEHTLFKPIVFGFKSFLIGSTYIFTAVVGMLASIFTGGFSFDMLNGPVGIYHNVDSVVKAGIISLIGYTALLSVNLGIMNLIPIPALDGGRILFVIYEAIFRKPVNKKAETTIIAIGAIFMVVIMILVTWNDIRRYFL.

Residue His21 participates in Zn(2+) binding. The active site involves Glu22. His25 contributes to the Zn(2+) binding site. A run of 4 helical transmembrane segments spans residues 172–194, 309–331, 352–374, and 401–420; these read FLTLFAGPLFNFILALVLFIGLA, GSTYIFTAVVGMLASIFTGGFSF, IISLIGYTALLSVNLGIMNLIPI, and TTIIAIGAIFMVVIMILVTW. A PDZ domain is found at 186-269; that stretch reads ALVLFIGLAY…TKSVELTPKK (84 aa).

It belongs to the peptidase M50B family. It depends on Zn(2+) as a cofactor.

It localises to the cell membrane. In Staphylococcus aureus (strain COL), this protein is Putative zinc metalloprotease SACOL1281.